The primary structure comprises 264 residues: MTDILEKIVAVKRQEIAAAIARKPLTAMRADAESRVLTRDFVAALRGKIAAGQPAVIAEIKKSSPSKGVLREDFIPADIAQSYAEHGAACLSVLTDLQFFRGCIDYLKQARASCPLPVLRKDFMLDAYQIYESRACGADAVLLIAAILDDAQMKDLEAIARSLDMAVLVEVHDAPELARALQLKTPLIGINNRNLKTFEVSLDTTLTLMRELPADRLLVCESGIHTRDDVLRMGAAGVNAFLVGEAFMRAPDPGLALAELFATA.

The protein belongs to the TrpC family.

It carries out the reaction 1-(2-carboxyphenylamino)-1-deoxy-D-ribulose 5-phosphate + H(+) = (1S,2R)-1-C-(indol-3-yl)glycerol 3-phosphate + CO2 + H2O. It participates in amino-acid biosynthesis; L-tryptophan biosynthesis; L-tryptophan from chorismate: step 4/5. The polypeptide is Indole-3-glycerol phosphate synthase (Albidiferax ferrireducens (strain ATCC BAA-621 / DSM 15236 / T118) (Rhodoferax ferrireducens)).